Here is a 328-residue protein sequence, read N- to C-terminus: Cytochrome c biogenesis protein CcsA (328 aa).

8 consecutive transmembrane segments (helical) span residues 13-33, 46-66, 73-93, 101-121, 146-166, 234-254, 263-283, and 295-315; these read ISFS…LVNL, GIII…IYSG, LYES…VSYF, LNAI…SGLL, MILG…LLVI, IISL…VWAN, WDPK…YLHI, and AIVA…VNLL.

It belongs to the CcmF/CycK/Ccl1/NrfE/CcsA family. As to quaternary structure, may interact with Ccs1.

It is found in the plastid. It localises to the chloroplast thylakoid membrane. In terms of biological role, required during biogenesis of c-type cytochromes (cytochrome c6 and cytochrome f) at the step of heme attachment. This Capsella bursa-pastoris (Shepherd's purse) protein is Cytochrome c biogenesis protein CcsA.